The following is a 273-amino-acid chain: 4-hydroxy-tetrahydrodipicolinate reductase (273 aa).

Residues 12 to 17 (GAGGRM) and Glu-38 contribute to the NAD(+) site. Arg-39 contributes to the NADP(+) binding site. NAD(+) contacts are provided by residues 102–104 (GTT) and 126–129 (AANF). His-159 acts as the Proton donor/acceptor in catalysis. His-160 is a (S)-2,3,4,5-tetrahydrodipicolinate binding site. Lys-163 functions as the Proton donor in the catalytic mechanism. Position 169–170 (169–170 (GT)) interacts with (S)-2,3,4,5-tetrahydrodipicolinate.

It belongs to the DapB family. As to quaternary structure, homotetramer.

The protein localises to the cytoplasm. It catalyses the reaction (S)-2,3,4,5-tetrahydrodipicolinate + NAD(+) + H2O = (2S,4S)-4-hydroxy-2,3,4,5-tetrahydrodipicolinate + NADH + H(+). It carries out the reaction (S)-2,3,4,5-tetrahydrodipicolinate + NADP(+) + H2O = (2S,4S)-4-hydroxy-2,3,4,5-tetrahydrodipicolinate + NADPH + H(+). It functions in the pathway amino-acid biosynthesis; L-lysine biosynthesis via DAP pathway; (S)-tetrahydrodipicolinate from L-aspartate: step 4/4. Its function is as follows. Catalyzes the conversion of 4-hydroxy-tetrahydrodipicolinate (HTPA) to tetrahydrodipicolinate. This chain is 4-hydroxy-tetrahydrodipicolinate reductase, found in Escherichia coli O127:H6 (strain E2348/69 / EPEC).